A 218-amino-acid polypeptide reads, in one-letter code: 3,4-dihydroxy-2-butanone 4-phosphate synthase (218 aa).

Residues 38–39, aspartate 43, 151–155, and glutamate 175 each bind D-ribulose 5-phosphate; these read RE and RRGHT. Residue glutamate 39 coordinates Mg(2+). Mg(2+) is bound at residue histidine 154.

It belongs to the DHBP synthase family. In terms of assembly, homodimer. Mg(2+) serves as cofactor. Mn(2+) is required as a cofactor.

The catalysed reaction is D-ribulose 5-phosphate = (2S)-2-hydroxy-3-oxobutyl phosphate + formate + H(+). The protein operates within cofactor biosynthesis; riboflavin biosynthesis; 2-hydroxy-3-oxobutyl phosphate from D-ribulose 5-phosphate: step 1/1. Functionally, catalyzes the conversion of D-ribulose 5-phosphate to formate and 3,4-dihydroxy-2-butanone 4-phosphate. The chain is 3,4-dihydroxy-2-butanone 4-phosphate synthase from Vibrio cholerae serotype O1 (strain ATCC 39541 / Classical Ogawa 395 / O395).